We begin with the raw amino-acid sequence, 192 residues long: MSEYLLLLIGTVLVNNFVLVKFLGLCPFMGVSSKLESAIGMSMATTFVLTLASILSYLVNQYLLLPFDLGYLRTMSFILVIAVVVQFTEMLVQKTSASLHRALGIYLPLITTNCAVLGVALLNINEKHGFIESAIFGFGAAVGFSLVLILFSAMRERLAAADVPTPFKGGAIAMVTAGLMSLAFMGFTGLVK.

Transmembrane regions (helical) follow at residues 5–25 (LLLL…FLGL), 39–59 (IGMS…SYLV), 65–85 (LPFD…AVVV), 102–122 (ALGI…VALL), 134–154 (AIFG…FSAM), and 171–191 (AIAM…TGLV).

The protein belongs to the NqrDE/RnfAE family. In terms of assembly, the complex is composed of six subunits: RnfA, RnfB, RnfC, RnfD, RnfE and RnfG.

Its subcellular location is the cell inner membrane. Functionally, part of a membrane-bound complex that couples electron transfer with translocation of ions across the membrane. This Shewanella pealeana (strain ATCC 700345 / ANG-SQ1) protein is Ion-translocating oxidoreductase complex subunit A.